Consider the following 791-residue polypeptide: Ubiquitin carboxyl-terminal hydrolase 10-A (791 aa).

Polar residues-rich tracts occupy residues 118 to 139 (FSES…SGTG) and 270 to 284 (DTTE…QTLE). Disordered regions lie at residues 118 to 156 (FSES…YYSY) and 270 to 291 (DTTE…EDTA). One can recognise a USP domain in the interval 408-788 (RGLINKGNWC…TAYLLYYRRV (381 aa)). Cysteine 417 acts as the Nucleophile in catalysis. Residues 560-580 (EVNKEEQEGSDEEWEQVGPRN) form a disordered region. Histidine 742 (proton acceptor) is an active-site residue.

Belongs to the peptidase C19 family. USP10 subfamily.

The protein resides in the cytoplasm. It localises to the nucleus. It catalyses the reaction Thiol-dependent hydrolysis of ester, thioester, amide, peptide and isopeptide bonds formed by the C-terminal Gly of ubiquitin (a 76-residue protein attached to proteins as an intracellular targeting signal).. In terms of biological role, hydrolase that can remove conjugated ubiquitin from target proteins such as p53/tp53, rps2/us5, rps3/us3, rps10/eS10, becn1, snx3 and cftr. Acts as an essential regulator of p53/tp53 stability: in unstressed cells, specifically deubiquitinates p53/tp53 in the cytoplasm, leading to counteracts MDM2 action and stabilize p53/tp53. Following DNA damage, translocates to the nucleus and deubiquitinates p53/tp53, leading to regulate the p53/TP53-dependent DNA damage response. Component of a regulatory loop that controls autophagy and p53/tp53 levels. Plays a key role in 40S ribosome subunit recycling when a ribosome has stalled during translation: acts both by inhibiting formation of stress granules, which store stalled translation pre-initiation complexes, and mediating deubiquitination of 40S ribosome subunits. Deubiquitinates cftr in early endosomes, enhancing its endocytic recycling. The polypeptide is Ubiquitin carboxyl-terminal hydrolase 10-A (usp10-a) (Xenopus laevis (African clawed frog)).